The chain runs to 136 residues: Glutamate-rich protein 4 (136 aa).

Positions 92–136 (EEEEEEEQEEKSCVEENKGPEEKQDEERSRSSYPAQRLPDFGMTI) are disordered. The segment covering 101-121 (EKSCVEENKGPEEKQDEERSR) has biased composition (basic and acidic residues).

The polypeptide is Glutamate-rich protein 4 (Erich4) (Mus musculus (Mouse)).